Consider the following 319-residue polypeptide: Annexin D4 (319 aa).

Annexin repeat units follow at residues 1 to 75 and 86 to 157; these read MALP…EFSR and HPWE…GLVS. The Ca(2+) site is built by G19, G21, and E72. A Phosphothreonine modification is found at T115. Residues Y159 and Y211 each carry the phosphotyrosine modification. 2 Annexin repeats span residues 169 to 240 and 241 to 316; these read DSAK…ICLL and KPAL…TLLS. S277 carries the phosphoserine modification. Y287 is subject to Phosphotyrosine.

This sequence belongs to the annexin (TC 1.A.31.1) family. In terms of tissue distribution, expressed mainly in roots and flowers. Lower in stems and leaves.

May be involved in osmotic stress and abscisic acid signaling in a calcium-dependent manner. This is Annexin D4 (ANN4) from Arabidopsis thaliana (Mouse-ear cress).